Consider the following 293-residue polypeptide: Acetyl-coenzyme A carboxylase carboxyl transferase subunit beta (293 aa).

Positions leucine 29 to alanine 293 constitute a CoA carboxyltransferase N-terminal domain. 4 residues coordinate Zn(2+): cysteine 33, cysteine 36, cysteine 52, and cysteine 55. The C4-type zinc finger occupies cysteine 33–cysteine 55.

The protein belongs to the AccD/PCCB family. As to quaternary structure, acetyl-CoA carboxylase is a heterohexamer composed of biotin carboxyl carrier protein (AccB), biotin carboxylase (AccC) and two subunits each of ACCase subunit alpha (AccA) and ACCase subunit beta (AccD). Zn(2+) is required as a cofactor.

It localises to the cytoplasm. It carries out the reaction N(6)-carboxybiotinyl-L-lysyl-[protein] + acetyl-CoA = N(6)-biotinyl-L-lysyl-[protein] + malonyl-CoA. It participates in lipid metabolism; malonyl-CoA biosynthesis; malonyl-CoA from acetyl-CoA: step 1/1. Its function is as follows. Component of the acetyl coenzyme A carboxylase (ACC) complex. Biotin carboxylase (BC) catalyzes the carboxylation of biotin on its carrier protein (BCCP) and then the CO(2) group is transferred by the transcarboxylase to acetyl-CoA to form malonyl-CoA. The sequence is that of Acetyl-coenzyme A carboxylase carboxyl transferase subunit beta from Parasynechococcus marenigrum (strain WH8102).